Consider the following 238-residue polypeptide: UPF0758 protein Dtpsy_2777 (238 aa).

In terms of domain architecture, MPN spans 116–238 (VFDSPQAVQH…ALSMAEQGLV (123 aa)). Histidine 187, histidine 189, and aspartate 200 together coordinate Zn(2+). Residues 187–200 (HNHPSGSVQPSRAD) carry the JAMM motif motif.

This sequence belongs to the UPF0758 family.

This is UPF0758 protein Dtpsy_2777 from Acidovorax ebreus (strain TPSY) (Diaphorobacter sp. (strain TPSY)).